Reading from the N-terminus, the 148-residue chain is Large ribosomal subunit protein uL15 (148 aa).

Residues Gly-18–Leu-38 form a disordered region.

This sequence belongs to the universal ribosomal protein uL15 family.

This is Large ribosomal subunit protein uL15 (rpl27a) from Dictyostelium discoideum (Social amoeba).